The chain runs to 229 residues: Ribonuclease 3 (229 aa).

Residues 4–133 (WEELQESVGF…FIGALYLDNG (130 aa)) enclose the RNase III domain. E46 lines the Mg(2+) pocket. D50 is a catalytic residue. Residues D119 and E122 each contribute to the Mg(2+) site. Residue E122 is part of the active site. Residues 159–228 (DYKTQLQEIV…AQFAINQLTH (70 aa)) enclose the DRBM domain.

The protein belongs to the ribonuclease III family. In terms of assembly, homodimer. Mg(2+) serves as cofactor.

The protein localises to the cytoplasm. It catalyses the reaction Endonucleolytic cleavage to 5'-phosphomonoester.. Digests double-stranded RNA. Involved in the processing of primary rRNA transcript to yield the immediate precursors to the large and small rRNAs (23S and 16S). Processes some mRNAs, and tRNAs when they are encoded in the rRNA operon. Processes pre-crRNA and tracrRNA of type II CRISPR loci if present in the organism. This Listeria welshimeri serovar 6b (strain ATCC 35897 / DSM 20650 / CCUG 15529 / CIP 8149 / NCTC 11857 / SLCC 5334 / V8) protein is Ribonuclease 3.